We begin with the raw amino-acid sequence, 319 residues long: G-protein coupled receptor 55 (319 aa).

Residues M1–T21 are Extracellular-facing. Residue N5 is glycosylated (N-linked (GlcNAc...) asparagine). Residues L22–I42 form a helical membrane-spanning segment. Residues H43 to A58 lie on the Cytoplasmic side of the membrane. The chain crosses the membrane as a helical span at residues T59–F79. The Extracellular portion of the chain corresponds to K80 to C94. The chain crosses the membrane as a helical span at residues T95–I115. Topologically, residues S116–K137 are cytoplasmic. The chain crosses the membrane as a helical span at residues I138 to S158. The Extracellular portion of the chain corresponds to F159–K180. N171 is a glycosylation site (N-linked (GlcNAc...) asparagine). Residues V181–C201 traverse the membrane as a helical segment. Residues S202 to S231 are Cytoplasmic-facing. Residues L232–V252 form a helical membrane-spanning segment. Topologically, residues R253–Q271 are extracellular. The helical transmembrane segment at L272–I292 threads the bilayer. Topologically, residues K293–G319 are cytoplasmic.

Belongs to the G-protein coupled receptor 1 family. As to expression, expressed in the caudate nucleus and putamen, but not detected in the hippocampus, thalamus, pons cerebellum, frontal cortex of the brain or in the liver. Expressed in osteoclasts and osteoblasts. Higly expressed in macrophages and B-cells.

Its subcellular location is the cell membrane. Its function is as follows. G-protein coupled receptor that binds to several ligands including 2-arachidonoyl lysophosphatidylinositol or lysophosphatidylglucoside with high affinity, leading to rapid and transient activation of numerous intracellular signaling pathways. Induces the Ca(2+) release from intracellular stores via ERK, the heterotrimeric G protein GNA13 and RHOA leading to morphological changes including cell rounding and stress fiber formation. In macrophages, acts downstream of lysophosphatidylglucoside to inhibit the translocation of the phospholipid-transporting ABCA1 to plasma membrane and subsequent cholesterol efflux leading to lipid accumulation and foam cell formation. The polypeptide is G-protein coupled receptor 55 (GPR55) (Homo sapiens (Human)).